Here is a 406-residue protein sequence, read N- to C-terminus: 1H-pyrrole-2-carbonyl-[peptidyl-carrier protein] brominase (406 aa).

Positions 17, 36, 42, 44, 45, 48, 101, 124, 291, and 304 each coordinate FAD.

The protein belongs to the flavin-dependent halogenase family.

The enzyme catalyses (1H-pyrrole-2-carbonyl)-[peptidyl-carrier protein] + 3 bromide + 3 FADH2 + 3 O2 = (3,4,5-tribromo-1H-pyrrole-2-carbonyl)-[peptidyl-carrier protein] + 3 FAD + 6 H2O. It catalyses the reaction (1H-pyrrole-2-carbonyl)-[peptidyl-carrier protein] + bromide + FADH2 + O2 = (5-bromo-1H-pyrrole-2-carbonyl)-[peptidyl-carrier protein] + FAD + 2 H2O. The catalysed reaction is (5-bromo-1H-pyrrole-2-carbonyl)-[peptidyl-carrier protein] + bromide + FADH2 + O2 = (4,5-dibromo-1H-pyrrole-2-carbonyl)-[peptidyl-carrier protein] + FAD + 2 H2O. It carries out the reaction (4,5-dibromo-1H-pyrrole-2-carbonyl)-[peptidyl-carrier protein] + bromide + FADH2 + O2 = (3,4,5-tribromo-1H-pyrrole-2-carbonyl)-[peptidyl-carrier protein] + FAD + 2 H2O. In terms of biological role, brominase involved in the biosynthesis of polybrominated aromatic organic compounds. Catalyzes three successive rounds of bromination of pyrrolyl-S-Bmp1 to produce mono-, di- and tribromopyrrolyl-S-Bmp1. The polypeptide is 1H-pyrrole-2-carbonyl-[peptidyl-carrier protein] brominase (Pseudoalteromonas luteoviolacea (strain 2ta16)).